The chain runs to 833 residues: Leucine--tRNA ligase (833 aa).

The short motif at 41–52 is the 'HIGH' region element; that stretch reads PYPSGAGLHVGH. The short motif at 610 to 614 is the 'KMSKS' region element; the sequence is KMSKS. Lysine 613 is an ATP binding site.

The protein belongs to the class-I aminoacyl-tRNA synthetase family.

The protein localises to the cytoplasm. The catalysed reaction is tRNA(Leu) + L-leucine + ATP = L-leucyl-tRNA(Leu) + AMP + diphosphate. This Streptococcus pyogenes serotype M28 (strain MGAS6180) protein is Leucine--tRNA ligase.